The sequence spans 442 residues: Thymidine phosphorylase (442 aa).

This sequence belongs to the thymidine/pyrimidine-nucleoside phosphorylase family. As to quaternary structure, homodimer.

It catalyses the reaction thymidine + phosphate = 2-deoxy-alpha-D-ribose 1-phosphate + thymine. Its pathway is pyrimidine metabolism; dTMP biosynthesis via salvage pathway; dTMP from thymine: step 1/2. The enzymes which catalyze the reversible phosphorolysis of pyrimidine nucleosides are involved in the degradation of these compounds and in their utilization as carbon and energy sources, or in the rescue of pyrimidine bases for nucleotide synthesis. The chain is Thymidine phosphorylase from Vibrio vulnificus (strain CMCP6).